Reading from the N-terminus, the 321-residue chain is Glucokinase (321 aa).

8 to 13 (GDVGGT) serves as a coordination point for ATP.

This sequence belongs to the bacterial glucokinase family.

The protein resides in the cytoplasm. It catalyses the reaction D-glucose + ATP = D-glucose 6-phosphate + ADP + H(+). In terms of biological role, not highly important in E.coli as glucose is transported into the cell by the PTS system already as glucose 6-phosphate. This is Glucokinase from Escherichia coli O139:H28 (strain E24377A / ETEC).